We begin with the raw amino-acid sequence, 125 residues long: Dirigent protein 22 (125 aa).

3 N-linked (GlcNAc...) asparagine glycosylation sites follow: N8, N30, and N65.

Belongs to the plant dirigent protein family. As to quaternary structure, homodimer.

It is found in the secreted. Its subcellular location is the extracellular space. It localises to the apoplast. In terms of biological role, dirigent proteins impart stereoselectivity on the phenoxy radical-coupling reaction, yielding optically active lignans from two molecules of coniferyl alcohol in the biosynthesis of lignans, flavonolignans, and alkaloids and thus plays a central role in plant secondary metabolism. The sequence is that of Dirigent protein 22 (DIR22) from Arabidopsis thaliana (Mouse-ear cress).